A 240-amino-acid polypeptide reads, in one-letter code: Probable transcriptional regulatory protein A2cp1_1765 (240 aa).

This sequence belongs to the TACO1 family.

The protein resides in the cytoplasm. This Anaeromyxobacter dehalogenans (strain 2CP-1 / ATCC BAA-258) protein is Probable transcriptional regulatory protein A2cp1_1765.